Consider the following 190-residue polypeptide: Major sperm protein 32 (190 aa).

The region spanning 72–189 (MIQTQPGTKI…RRKNLPIEYN (118 aa)) is the MSP domain.

In terms of tissue distribution, sperm.

It is found in the cell projection. It localises to the pseudopodium. Its subcellular location is the cytoplasm. The protein resides in the cytoskeleton. In terms of biological role, central component in molecular interactions underlying sperm crawling. Forms an extensive filament system that extends from sperm villipoda, along the leading edge of the pseudopod. This chain is Major sperm protein 32 (msp-32), found in Caenorhabditis elegans.